Reading from the N-terminus, the 490-residue chain is Tektin-3 (490 aa).

O-linked (GalNAc...) threonine glycans are attached at residues threonine 7 and threonine 9. Residues asparagine 41, asparagine 86, asparagine 111, and asparagine 276 are each glycosylated (N-linked (GlcNAc...) asparagine). Residues 419–456 (RLVNEVYEVDETIQTLQQRLRDSEDTLQSLAHTKATLE) are a coiled coil.

Belongs to the tektin family. Microtubule inner protein component of sperm flagellar doublet microtubules. Interacts with TEKT1, TEKT2, TEKT4 and TEKT5. Interacts with CCDC38. N- and O-glycosylated. In terms of processing, may be proteolytically processed during the epididymal transit of spermatozoa. Post-translationally, ubiquitinated, leading to its degradation. Deubiquitinated by USP16, promoting its stability. As to expression, expressed in epididymal sperm (at protein level).

It localises to the cytoplasm. The protein resides in the cytoskeleton. The protein localises to the cilium axoneme. Its subcellular location is the flagellum axoneme. It is found in the cytoplasmic vesicle. It localises to the secretory vesicle. The protein resides in the acrosome outer membrane. Its function is as follows. Microtubule inner protein (MIP) part of the dynein-decorated doublet microtubules (DMTs) in cilia and flagellar axoneme. Forms filamentous polymers in the walls of ciliary and flagellar microtubules. Required for normal sperm mobility. The polypeptide is Tektin-3 (Tekt3) (Rattus norvegicus (Rat)).